The following is a 199-amino-acid chain: Phosphatidylethanolamine N-methyltransferase (199 aa).

Residues 2-12 (SWLLGYVDPTE) are Lumenal-facing. Positions 13–33 (PSFVAAVLTIVFNPLFWNVVA) form an intramembrane region, helical. Over 34 to 45 (RWEQRTRKLSRA) the chain is Lumenal. A helical transmembrane segment spans residues 46 to 66 (FGSPYLACYSLGSIILLLNIL). Residues 67–93 (RSHCFTQAMMSQPKMEGLDSHTIYFLG) are Cytoplasmic-facing. Residues 94–114 (LALLGWGLVFVLSSFYALGFT) traverse the membrane as a helical segment. 98–100 (GWG) lines the S-adenosyl-L-methionine pocket. The Lumenal portion of the chain corresponds to 115 to 157 (GTFLGDYFGILKESRVTTFPFSVLDNPMYWGSTANYLGWALMH). Residues 158-178 (ASPTGLLLTVLVALVYVVALL) form a helical membrane-spanning segment. The Cytoplasmic segment spans residues 179–199 (FEEPFTAEIYRRKATRLHKRS). 180 to 181 (EE) contributes to the S-adenosyl-L-methionine binding site.

It belongs to the class VI-like SAM-binding methyltransferase superfamily. PEMT/PEM2 methyltransferase family. Expressed in liver (at protein level).

Its subcellular location is the endoplasmic reticulum membrane. It is found in the mitochondrion membrane. The enzyme catalyses a 1,2-diacyl-sn-glycero-3-phosphoethanolamine + S-adenosyl-L-methionine = a 1,2-diacyl-sn-glycero-3-phospho-N-methylethanolamine + S-adenosyl-L-homocysteine + H(+). It carries out the reaction a 1,2-diacyl-sn-glycero-3-phospho-N-methylethanolamine + S-adenosyl-L-methionine = a 1,2-diacyl-sn-glycero-3-phospho-N,N-dimethylethanolamine + S-adenosyl-L-homocysteine + H(+). The catalysed reaction is a 1,2-diacyl-sn-glycero-3-phospho-N,N-dimethylethanolamine + S-adenosyl-L-methionine = a 1,2-diacyl-sn-glycero-3-phosphocholine + S-adenosyl-L-homocysteine + H(+). It catalyses the reaction 1,2-di-(9Z-octadecenoyl)-sn-glycero-3-phosphoethanolamine + S-adenosyl-L-methionine = 1,2-di-(9Z-octadecenoyl)-sn-glycero-3-phospho-N-methylethanolamine + S-adenosyl-L-homocysteine + H(+). The enzyme catalyses 1,2-di-(9Z-octadecenoyl)-sn-glycero-3-phospho-N-methylethanolamine + S-adenosyl-L-methionine = 1,2-di-(9Z-octadecenoyl)-sn-glycero-3-phospho-N,N-dimethylethanolamine + S-adenosyl-L-homocysteine + H(+). It carries out the reaction 1,2-di-(9Z-octadecenoyl)-sn-glycero-3-phospho-N,N-dimethylethanolamine + S-adenosyl-L-methionine = 1,2-di-(9Z-octadecenoyl)-sn-glycero-3-phosphocholine + S-adenosyl-L-homocysteine + H(+). The catalysed reaction is 1,2-di-(9Z,12Z-octadecadienoyl)-sn-glycero-3-phosphoethanolamine + S-adenosyl-L-methionine = 1,2-di-(9Z,12Z-octadecadienoyl)-sn-glycero-3-phospho-N-methylethanolamine + S-adenosyl-L-homocysteine + H(+). It catalyses the reaction 1,2-di-(9Z,12Z-octadecadienoyl)-sn-glycero-3-phospho-N-methylethanolamine + S-adenosyl-L-methionine = 1,2-di-(9Z,12Z-octadecadienoyl)-sn-glycero-3-phospho-N,N-dimethylethanolamine + S-adenosyl-L-homocysteine + H(+). The enzyme catalyses 1,2-di-(9Z,12Z-octadecadienoyl)-sn-glycero-3-phospho-N,N-dimethylethanolamine + S-adenosyl-L-methionine = 1,2-di-(9Z,12Z-octadecadienoyl)-sn-glycero-3-phosphocholine + S-adenosyl-L-homocysteine + H(+). It carries out the reaction 1,2-di-(9Z,12Z,15Z-octadecatrienoyl)-sn-glycero-3-phosphoethanolamine + S-adenosyl-L-methionine = 1,2-di-(9Z,12Z,15Z-octadecatrienoyl)-sn-glycero-3-phospho-N-methylethanolamine + S-adenosyl-L-homocysteine + H(+). The catalysed reaction is 1,2-di-(9Z,12Z,15Z-octadecatrienoyl)-sn-glycero-3-phospho-N-methylethanolamine + S-adenosyl-L-methionine = 1,2-di-(9Z,12Z,15Z-octadecatrienoyl)-sn-glycero-3-phospho-N,N-dimethylethanolamine + S-adenosyl-L-homocysteine + H(+). It catalyses the reaction 1,2-di-(9Z,12Z,15Z-octadecatrienoyl)-sn-glycero-3-phospho-N,N-dimethylethanolamine + S-adenosyl-L-methionine = 1,2-di-(9Z,12Z,15Z-octadecatrienoyl)-sn-glycero-3-phosphocholine + S-adenosyl-L-homocysteine + H(+). The enzyme catalyses 1-hexadecanoyl-2-(4Z,7Z,10Z,13Z,16Z,19Z-docosahexaenoyl)-sn-glycero-3-phosphoethanolamine + S-adenosyl-L-methionine = 1-hexadecanoyl-2-(4Z,7Z,10Z,13Z,16Z,19Z-docosahexaenoyl)-sn-glycero-3-phospho-N-methylethanolamine + S-adenosyl-L-homocysteine + H(+). It carries out the reaction 1-hexadecanoyl-2-(4Z,7Z,10Z,13Z,16Z,19Z-docosahexaenoyl)-sn-glycero-3-phospho-N-methylethanolamine + S-adenosyl-L-methionine = 1-hexadecanoyl-2-(4Z,7Z,10Z,13Z,16Z,19Z-docosahexaenoyl)-sn-glycero-3-phospho-N,N-dimethylethanolamine + S-adenosyl-L-homocysteine + H(+). The catalysed reaction is 1-hexadecanoyl-2-(4Z,7Z,10Z,13Z,16Z,19Z-docosahexaenoyl)-sn-glycero-3-phospho-N,N-dimethylethanolamine + S-adenosyl-L-methionine = 1-hexadecanoyl-2-(4Z,7Z,10Z,13Z,16Z,19Z-docosahexaenoyl)-sn-glycero-3-phosphocholine + S-adenosyl-L-homocysteine + H(+). The protein operates within phospholipid metabolism; phosphatidylcholine biosynthesis. Catalyzes the three sequential steps of the methylation pathway for the biosynthesis of phosphatidylcholine, a critical and essential component for membrane structure. Uses S-adenosylmethionine (S-adenosyl-L-methionine, SAM or AdoMet) as the methyl group donor for the methylation of phosphatidylethanolamine (1,2-diacyl-sn-glycero-3-phosphoethanolamine, PE) to phosphatidylmonomethylethanolamine (1,2-diacyl-sn-glycero-3-phospho-N-methylethanolamine, PMME), PMME to phosphatidyldimethylethanolamine (1,2-diacyl-sn-glycero-3-phospho-N,N-dimethylethanolamine, PDME), and PDME to phosphatidylcholine (1,2-diacyl-sn-glycero-3-phosphocholine, PC), producing S-adenosyl-L-homocysteine in each step. The polypeptide is Phosphatidylethanolamine N-methyltransferase (Rattus norvegicus (Rat)).